A 710-amino-acid chain; its full sequence is Elongation factor G (710 aa).

One can recognise a tr-type G domain in the interval 8–290 (SQYRNIGISA…AIVEYLPSPM (283 aa)). GTP is bound by residues 17–24 (AHIDAGKT), 88–92 (DTPGH), and 142–145 (NKMD).

It belongs to the TRAFAC class translation factor GTPase superfamily. Classic translation factor GTPase family. EF-G/EF-2 subfamily.

The protein localises to the cytoplasm. In terms of biological role, catalyzes the GTP-dependent ribosomal translocation step during translation elongation. During this step, the ribosome changes from the pre-translocational (PRE) to the post-translocational (POST) state as the newly formed A-site-bound peptidyl-tRNA and P-site-bound deacylated tRNA move to the P and E sites, respectively. Catalyzes the coordinated movement of the two tRNA molecules, the mRNA and conformational changes in the ribosome. The sequence is that of Elongation factor G from Buchnera aphidicola subsp. Baizongia pistaciae (strain Bp).